We begin with the raw amino-acid sequence, 362 residues long: Aminomethyltransferase (362 aa).

This sequence belongs to the GcvT family. In terms of assembly, the glycine cleavage system is composed of four proteins: P, T, L and H.

It carries out the reaction N(6)-[(R)-S(8)-aminomethyldihydrolipoyl]-L-lysyl-[protein] + (6S)-5,6,7,8-tetrahydrofolate = N(6)-[(R)-dihydrolipoyl]-L-lysyl-[protein] + (6R)-5,10-methylene-5,6,7,8-tetrahydrofolate + NH4(+). The glycine cleavage system catalyzes the degradation of glycine. This Colwellia psychrerythraea (strain 34H / ATCC BAA-681) (Vibrio psychroerythus) protein is Aminomethyltransferase.